The primary structure comprises 451 residues: mRNA cleavage and polyadenylation factor CLP1 (451 aa).

ATP-binding positions include K75 and 136–141 (NTGKTA).

The protein belongs to the Clp1 family. Clp1 subfamily. Component of a pre-mRNA cleavage factor complex. Interacts directly with PCF11.

The protein resides in the nucleus. Functionally, required for endonucleolytic cleavage during polyadenylation-dependent pre-mRNA 3'-end formation. This is mRNA cleavage and polyadenylation factor CLP1 from Candida glabrata (strain ATCC 2001 / BCRC 20586 / JCM 3761 / NBRC 0622 / NRRL Y-65 / CBS 138) (Yeast).